The chain runs to 639 residues: Envelope glycoprotein (639 aa).

The first 34 residues, 1–34 (MESPTHPKPSKDKTFPWNLVFLVGILFQIDMGMA), serve as a signal peptide directing secretion. At 35–583 (NPSPHQVYNV…FNKSPWFTTL (549 aa)) the chain is on the extracellular side. N43 and N58 each carry an N-linked (GlcNAc...) asparagine; by host glycan. Disulfide bonds link C122–C144 and C136–C149. Residues 232-278 (QAMGPNLVLPDQKPPSRQSQTKSKVTTQRPQITSSTPRSVASATMGP) form a disordered region. Residues 246 to 273 (PSRQSQTKSKVTTQRPQITSSTPRSVAS) are compositionally biased toward polar residues. N-linked (GlcNAc...) asparagine; by host glycosylation is found at N299 and N304. Intrachain disulfides connect C309–C312, C309–C536, and C528–C535. The CXXC motif lies at 309 to 312 (CWLC). N328, N331, N387, and N407 each carry an N-linked (GlcNAc...) asparagine; by host glycan. The segment at 445-465 (ISLTVALMLGGLTVGGIAAGV) is fusion peptide. 2 coiled-coil regions span residues 473 to 522 (LETA…ILFL) and 532 to 568 (KEEC…SQQG). The interval 511-527 (LQNRRGLDILFLQEGGL) is immunosuppression. Residues 528 to 536 (CAALKEECC) carry the CX6CC motif. A helical transmembrane segment spans residues 584–604 (ISSIMGPLLILLLILLLGPCI). Residue C603 is the site of S-palmitoyl cysteine; by host attachment. The Cytoplasmic portion of the chain corresponds to 605 to 639 (LNRLVQFVKDRISVVQALILTQQYQQIQQYDSDRP).

As to quaternary structure, the mature envelope protein (Env) consists of a trimer of SU-TM heterodimers attached by a labile interchain disulfide bond. In terms of processing, specific enzymatic cleavages in vivo yield mature proteins. Envelope glycoproteins are synthesized as an inactive precursor that is N-glycosylated and processed likely by host cell furin or by a furin-like protease in the Golgi to yield the mature SU and TM proteins. The cleavage site between SU and TM requires the minimal sequence [KR]-X-[KR]-R. The R-peptide is released from the C-terminus of the cytoplasmic tail of the TM protein upon particle formation as a result of proteolytic cleavage by the viral protease. Cleavage of this peptide is required for TM to become fusogenic. The CXXC motif is highly conserved across a broad range of retroviral envelope proteins. It is thought to participate in the formation of a labile disulfide bond possibly with the CX6CC motif present in the transmembrane protein. Isomerization of the intersubunit disulfide bond to an SU intrachain disulfide bond is thought to occur upon receptor recognition in order to allow membrane fusion. Post-translationally, the transmembrane protein is palmitoylated. In terms of processing, the R-peptide is palmitoylated.

Its subcellular location is the virion membrane. The protein localises to the host cell membrane. Functionally, the surface protein (SU) attaches the virus to the host cell by binding to its receptor. This interaction triggers the refolding of the transmembrane protein (TM) and is thought to activate its fusogenic potential by unmasking its fusion peptide. Fusion occurs at the host cell plasma membrane. In terms of biological role, the transmembrane protein (TM) acts as a class I viral fusion protein. Under the current model, the protein has at least 3 conformational states: pre-fusion native state, pre-hairpin intermediate state, and post-fusion hairpin state. During viral and target cell membrane fusion, the coiled coil regions (heptad repeats) assume a trimer-of-hairpins structure, positioning the fusion peptide in close proximity to the C-terminal region of the ectodomain. The formation of this structure appears to drive apposition and subsequent fusion of viral and target cell membranes. Membranes fusion leads to delivery of the nucleocapsid into the cytoplasm. The polypeptide is Envelope glycoprotein (env) (Feline leukemia virus (strain C/Sarma)).